The sequence spans 177 residues: Probable DNA-directed RNA polymerase subunit delta (177 aa).

One can recognise an HTH HARE-type domain in the interval 14-81 (CSMIEVVHSV…GENRWGLRSW (68 aa)). The tract at residues 91–177 (ILPQPKPKKK…DETEEEEEEL (87 aa)) is disordered. The span at 106 to 177 (DGFDDYIEED…DETEEEEEEL (72 aa)) shows a compositional bias: acidic residues.

The protein belongs to the RpoE family. RNAP is composed of a core of 2 alpha, a beta and a beta' subunits. The core is associated with a delta subunit and one of several sigma factors.

Its function is as follows. Participates in both the initiation and recycling phases of transcription. In the presence of the delta subunit, RNAP displays an increased specificity of transcription, a decreased affinity for nucleic acids, and an increased efficiency of RNA synthesis because of enhanced recycling. In Bacillus cereus (strain G9842), this protein is Probable DNA-directed RNA polymerase subunit delta.